Reading from the N-terminus, the 276-residue chain is Kallikrein-11 (276 aa).

Residues 1–44 form the signal peptide; sequence MRRLKSDWKLSTETREPGARPALLQARMILRLIALALVTGHVGG. A propeptide spans 45-47 (activation peptide); that stretch reads ETR. The Peptidase S1 domain occupies 48–274; it reads IIKGYECRPH…YFNWIHEVMR (227 aa). Intrachain disulfides connect Cys54–Cys189, Cys73–Cys89, Cys168–Cys235, Cys200–Cys214, and Cys225–Cys250. His88 acts as the Charge relay system in catalysis. The N-linked (GlcNAc...) asparagine glycan is linked to Asn125. Asp136 functions as the Charge relay system in the catalytic mechanism. N-linked (GlcNAc...) asparagine glycosylation is found at Asn191 and Asn207. The active-site Charge relay system is Ser229. The N-linked (GlcNAc...) asparagine glycan is linked to Asn236.

The protein belongs to the peptidase S1 family. Kallikrein subfamily. As to expression, expressed in brain and prostate (isoform 1) and prostate (isoform 2).

It localises to the secreted. Functionally, possible multifunctional protease. Efficiently cleaves 'bz-Phe-Arg-4-methylcoumaryl-7-amide', a kallikrein substrate, and weakly cleaves other substrates for kallikrein and trypsin. The protein is Kallikrein-11 (Klk11) of Mus musculus (Mouse).